The sequence spans 80 residues: Small ribosomal subunit protein bS18 (80 aa).

It belongs to the bacterial ribosomal protein bS18 family. In terms of assembly, part of the 30S ribosomal subunit. Forms a tight heterodimer with protein bS6.

Binds as a heterodimer with protein bS6 to the central domain of the 16S rRNA, where it helps stabilize the platform of the 30S subunit. The polypeptide is Small ribosomal subunit protein bS18 (Staphylococcus haemolyticus (strain JCSC1435)).